Reading from the N-terminus, the 354-residue chain is Glycerol-1-phosphate dehydrogenase [NAD(P)+] (354 aa).

NAD(+)-binding positions include 103–107 (GRSVD) and 125–128 (TAAS). Asp130 is a substrate binding site. Ser134 is a binding site for NAD(+). Asp176 is a binding site for substrate. Asp176 and His255 together coordinate Zn(2+). His259 lines the substrate pocket. His271 contacts Zn(2+).

Belongs to the glycerol-1-phosphate dehydrogenase family. In terms of assembly, homodimer. The cofactor is Zn(2+).

Its subcellular location is the cytoplasm. It catalyses the reaction sn-glycerol 1-phosphate + NAD(+) = dihydroxyacetone phosphate + NADH + H(+). The enzyme catalyses sn-glycerol 1-phosphate + NADP(+) = dihydroxyacetone phosphate + NADPH + H(+). Its pathway is membrane lipid metabolism; glycerophospholipid metabolism. Its function is as follows. Catalyzes the NAD(P)H-dependent reduction of dihydroxyacetonephosphate (DHAP or glycerone phosphate) to glycerol 1-phosphate (G1P). The G1P thus generated is used as the glycerophosphate backbone of phospholipids in the cellular membranes of Archaea. The chain is Glycerol-1-phosphate dehydrogenase [NAD(P)+] from Nitrosopumilus maritimus (strain SCM1).